The chain runs to 227 residues: tRNA pseudouridine synthase B (227 aa).

The Nucleophile role is filled by Asp-42.

This sequence belongs to the pseudouridine synthase TruB family. Type 1 subfamily.

It carries out the reaction uridine(55) in tRNA = pseudouridine(55) in tRNA. Its function is as follows. Responsible for synthesis of pseudouridine from uracil-55 in the psi GC loop of transfer RNAs. The polypeptide is tRNA pseudouridine synthase B (Ureaplasma parvum serovar 3 (strain ATCC 27815 / 27 / NCTC 11736)).